Reading from the N-terminus, the 321-residue chain is Tetraacyldisaccharide 4'-kinase (321 aa).

Residue 54 to 61 coordinates ATP; that stretch reads SVGGTGKT.

It belongs to the LpxK family.

The enzyme catalyses a lipid A disaccharide + ATP = a lipid IVA + ADP + H(+). Its pathway is glycolipid biosynthesis; lipid IV(A) biosynthesis; lipid IV(A) from (3R)-3-hydroxytetradecanoyl-[acyl-carrier-protein] and UDP-N-acetyl-alpha-D-glucosamine: step 6/6. Transfers the gamma-phosphate of ATP to the 4'-position of a tetraacyldisaccharide 1-phosphate intermediate (termed DS-1-P) to form tetraacyldisaccharide 1,4'-bis-phosphate (lipid IVA). This chain is Tetraacyldisaccharide 4'-kinase, found in Rickettsia rickettsii.